The sequence spans 340 residues: Protein phosphatase PTC7 homolog fig (340 aa).

The 257-residue stretch at 58-314 folds into the PPM-type phosphatase domain; it reads RAQAETIQAP…DDITVVLASV (257 aa). Mn(2+) is bound by residues D90, G91, and D236.

It belongs to the PP2C family. Requires Mg(2+) as cofactor. The cofactor is Mn(2+).

The enzyme catalyses O-phospho-L-seryl-[protein] + H2O = L-seryl-[protein] + phosphate. The catalysed reaction is O-phospho-L-threonyl-[protein] + H2O = L-threonyl-[protein] + phosphate. This is Protein phosphatase PTC7 homolog fig from Drosophila pseudoobscura pseudoobscura (Fruit fly).